Consider the following 88-residue polypeptide: Cell division topological specificity factor (88 aa).

Belongs to the MinE family.

Its function is as follows. Prevents the cell division inhibition by proteins MinC and MinD at internal division sites while permitting inhibition at polar sites. This ensures cell division at the proper site by restricting the formation of a division septum at the midpoint of the long axis of the cell. This Clostridium novyi (strain NT) protein is Cell division topological specificity factor.